Reading from the N-terminus, the 252-residue chain is Adenosylcobinamide-GDP ribazoletransferase (252 aa).

The next 7 membrane-spanning stretches (helical) occupy residues 4 to 24 (LFKG…PYVE), 38 to 58 (PIIG…INYL), 60 to 80 (ISIV…TGML), 113 to 133 (FSVI…HSFL), 141 to 161 (ILMF…ITII), 190 to 210 (LVCI…LLIV), and 232 to 252 (VAGF…CLFT).

The protein belongs to the CobS family. The cofactor is Mg(2+).

It is found in the cell membrane. The enzyme catalyses alpha-ribazole + adenosylcob(III)inamide-GDP = adenosylcob(III)alamin + GMP + H(+). The catalysed reaction is alpha-ribazole 5'-phosphate + adenosylcob(III)inamide-GDP = adenosylcob(III)alamin 5'-phosphate + GMP + H(+). Its pathway is cofactor biosynthesis; adenosylcobalamin biosynthesis; adenosylcobalamin from cob(II)yrinate a,c-diamide: step 7/7. In terms of biological role, joins adenosylcobinamide-GDP and alpha-ribazole to generate adenosylcobalamin (Ado-cobalamin). Also synthesizes adenosylcobalamin 5'-phosphate from adenosylcobinamide-GDP and alpha-ribazole 5'-phosphate. The sequence is that of Adenosylcobinamide-GDP ribazoletransferase from Clostridium botulinum (strain Alaska E43 / Type E3).